Reading from the N-terminus, the 142-residue chain is MKTPRRRMRLAVFKALFQHEFRRDEDLEQILEEILDETYDKKAKEDARRYIRGIKENLPMIDNLISRYLEKWSLNRLSAVDRNVLRLATYELLFEKDIPIEVTIDEAIEIAKRYGTENSGKFVNGILDRIAKEHAPKEKFEL.

Belongs to the NusB family.

Functionally, involved in transcription antitermination. Required for transcription of ribosomal RNA (rRNA) genes. Binds specifically to the boxA antiterminator sequence of the ribosomal RNA (rrn) operons. This chain is Transcription antitermination protein NusB, found in Thermotoga sp. (strain RQ2).